Here is an 84-residue protein sequence, read N- to C-terminus: Small ribosomal subunit protein uS17 (84 aa).

Belongs to the universal ribosomal protein uS17 family. In terms of assembly, part of the 30S ribosomal subunit.

Functionally, one of the primary rRNA binding proteins, it binds specifically to the 5'-end of 16S ribosomal RNA. This Nitrosomonas europaea (strain ATCC 19718 / CIP 103999 / KCTC 2705 / NBRC 14298) protein is Small ribosomal subunit protein uS17.